A 368-amino-acid polypeptide reads, in one-letter code: NAD(P)H-quinone oxidoreductase subunit 1, chloroplastic (368 aa).

9 helical membrane passes run 27-47 (FLWIIFSILILMLGVTIGVLV), 97-117 (WLFNIGPILVLIPVFLSYLVI), 130-150 (IGVFFWIAVSSVVPLGLLMAG), 166-186 (AAQSISYEIPLALSVLSIALL), 204-224 (FLSWNLWRQPIGFIVFFIASL), 249-269 (YSGMKFAFFYLASYLNLLVSS), 270-290 (LFVTILYLGGWHFSIPFFSLF), 305-325 (VISIIIGIVITLVKSYLFLFI), and 348-368 (FLLPIALGNLLLTTSFQLFLL).

The protein belongs to the complex I subunit 1 family. In terms of assembly, NDH is composed of at least 16 different subunits, 5 of which are encoded in the nucleus.

Its subcellular location is the plastid. The protein localises to the chloroplast thylakoid membrane. It catalyses the reaction a plastoquinone + NADH + (n+1) H(+)(in) = a plastoquinol + NAD(+) + n H(+)(out). It carries out the reaction a plastoquinone + NADPH + (n+1) H(+)(in) = a plastoquinol + NADP(+) + n H(+)(out). In terms of biological role, NDH shuttles electrons from NAD(P)H:plastoquinone, via FMN and iron-sulfur (Fe-S) centers, to quinones in the photosynthetic chain and possibly in a chloroplast respiratory chain. The immediate electron acceptor for the enzyme in this species is believed to be plastoquinone. Couples the redox reaction to proton translocation, and thus conserves the redox energy in a proton gradient. In Marchantia polymorpha (Common liverwort), this protein is NAD(P)H-quinone oxidoreductase subunit 1, chloroplastic.